We begin with the raw amino-acid sequence, 189 residues long: UPF0301 protein PLES_04031 (189 aa).

Belongs to the UPF0301 (AlgH) family.

This Pseudomonas aeruginosa (strain LESB58) protein is UPF0301 protein PLES_04031.